Consider the following 166-residue polypeptide: Interferon gamma (166 aa).

A signal peptide spans 1–23; that stretch reads MNYTSYILAFQLCVILGSSGCYC. At Q24 the chain carries Pyrrolidone carboxylic acid. N-linked (GlcNAc...) asparagine glycans are attached at residues N39 and N106.

It belongs to the type II (or gamma) interferon family. In terms of assembly, homodimer. Interacts with IFNGR1 (via extracellular domain); this interaction promotes IFNGR1 dimerization. As to expression, released primarily from activated T lymphocytes.

The protein resides in the secreted. Functionally, type II interferon produced by immune cells such as T-cells and NK cells that plays crucial roles in antimicrobial, antiviral, and antitumor responses by activating effector immune cells and enhancing antigen presentation. Primarily signals through the JAK-STAT pathway after interaction with its receptor IFNGR1 to affect gene regulation. Upon IFNG binding, IFNGR1 intracellular domain opens out to allow association of downstream signaling components JAK2, JAK1 and STAT1, leading to STAT1 activation, nuclear translocation and transcription of IFNG-regulated genes. Many of the induced genes are transcription factors such as IRF1 that are able to further drive regulation of a next wave of transcription. Plays a role in class I antigen presentation pathway by inducing a replacement of catalytic proteasome subunits with immunoproteasome subunits. In turn, increases the quantity, quality, and repertoire of peptides for class I MHC loading. Increases the efficiency of peptide generation also by inducing the expression of activator PA28 that associates with the proteasome and alters its proteolytic cleavage preference. Up-regulates as well MHC II complexes on the cell surface by promoting expression of several key molecules such as cathepsins B/CTSB, H/CTSH, and L/CTSL. Participates in the regulation of hematopoietic stem cells during development and under homeostatic conditions by affecting their development, quiescence, and differentiation. The chain is Interferon gamma (IFNG) from Camelus bactrianus (Bactrian camel).